Reading from the N-terminus, the 359-residue chain is N-acetyl-gamma-glutamyl-phosphate reductase (359 aa).

Cys162 is a catalytic residue.

It belongs to the NAGSA dehydrogenase family. Type 1 subfamily.

It localises to the cytoplasm. The enzyme catalyses N-acetyl-L-glutamate 5-semialdehyde + phosphate + NADP(+) = N-acetyl-L-glutamyl 5-phosphate + NADPH + H(+). It functions in the pathway amino-acid biosynthesis; L-arginine biosynthesis; N(2)-acetyl-L-ornithine from L-glutamate: step 3/4. Catalyzes the NADPH-dependent reduction of N-acetyl-5-glutamyl phosphate to yield N-acetyl-L-glutamate 5-semialdehyde. This is N-acetyl-gamma-glutamyl-phosphate reductase from Prochlorococcus marinus (strain NATL2A).